Consider the following 400-residue polypeptide: Subtilisin-like protease 7 (400 aa).

A signal peptide spans 1 to 20; sequence MGFITKAIPLALAAASVING. Positions 21-119 are excised as a propeptide; the sequence is AEILETRAGV…IERDARVQIN (99 aa). The Inhibitor I9 domain occupies 36–118; it reads KYIVVMNDGM…YIERDARVQI (83 aa). Residues 129 to 400 enclose the Peptidase S8 domain; that stretch reads SWGLARVGSK…GKLINNGSGK (272 aa). Active-site charge relay system residues include D161 and H192. Residue N252 is glycosylated (N-linked (GlcNAc...) asparagine). Catalysis depends on S346, which acts as the Charge relay system. N-linked (GlcNAc...) asparagine glycosylation is present at N396.

The protein belongs to the peptidase S8 family.

It is found in the secreted. In terms of biological role, secreted subtilisin-like serine protease with keratinolytic activity that contributes to pathogenicity. In Arthroderma gypseum (strain ATCC MYA-4604 / CBS 118893) (Microsporum gypseum), this protein is Subtilisin-like protease 7 (SUB7).